Here is a 355-residue protein sequence, read N- to C-terminus: Protein HGH1 homolog (355 aa).

A disordered region spans residues 324 to 355; sequence DEEGDPTPEEIEQMNKKQKLEDEDAQFETDEI. Composition is skewed to acidic residues over residues 325-335 and 344-355; these read EEGDPTPEEIE and EDEDAQFETDEI.

This sequence belongs to the HGH1 family.

In Dictyostelium discoideum (Social amoeba), this protein is Protein HGH1 homolog.